Consider the following 593-residue polypeptide: A-type ATP synthase subunit A (593 aa).

236–243 (GPFGSGKT) contributes to the ATP binding site.

The protein belongs to the ATPase alpha/beta chains family. Has multiple subunits with at least A(3), B(3), C, D, E, F, H, I and proteolipid K(x).

It localises to the cell membrane. It catalyses the reaction ATP + H2O + 4 H(+)(in) = ADP + phosphate + 5 H(+)(out). In terms of biological role, component of the A-type ATP synthase that produces ATP from ADP in the presence of a proton gradient across the membrane. The A chain is the catalytic subunit. This chain is A-type ATP synthase subunit A, found in Pyrobaculum arsenaticum (strain DSM 13514 / JCM 11321 / PZ6).